Here is a 144-residue protein sequence, read N- to C-terminus: Gastric inhibitory polypeptide (144 aa).

A signal peptide spans 1-21 (MVALKTCSLLLVLLFLAVGLG). Propeptides lie at residues 22–42 (EKEE…PRGP) and 87–144 (EARA…LRSQ). The interval 92–112 (ELAGQSQRNEEKEAQGSSLPK) is disordered.

Belongs to the glucagon family. In terms of tissue distribution, highly expressed in the duodenum and jejunum.

Its subcellular location is the secreted. Potent stimulator of insulin secretion and relatively poor inhibitor of gastric acid secretion. This Rattus norvegicus (Rat) protein is Gastric inhibitory polypeptide (Gip).